A 238-amino-acid chain; its full sequence is Nucleoside diphosphate kinase III, chloroplastic/mitochondrial (238 aa).

The N-terminal 85 residues, 1-85 (MSSQICRSAS…YMIQDQEVLA (85 aa)), are a transit peptide targeting the chloroplast and mitochondrion. Positions 96, 144, 172, 178, 189, and 199 each coordinate ATP. Catalysis depends on His-202, which acts as the Pros-phosphohistidine intermediate.

It belongs to the NDK family. As to quaternary structure, homohexamer. The cofactor is Mg(2+).

It localises to the plastid. It is found in the chloroplast thylakoid lumen. The protein localises to the mitochondrion intermembrane space. The catalysed reaction is a 2'-deoxyribonucleoside 5'-diphosphate + ATP = a 2'-deoxyribonucleoside 5'-triphosphate + ADP. The enzyme catalyses a ribonucleoside 5'-diphosphate + ATP = a ribonucleoside 5'-triphosphate + ADP. In terms of biological role, major role in the synthesis of nucleoside triphosphates other than ATP. The ATP gamma phosphate is transferred to the NDP beta phosphate via a ping-pong mechanism, using a phosphorylated active-site intermediate. Shows the highest specificity towards GDP. This is Nucleoside diphosphate kinase III, chloroplastic/mitochondrial (NDPK3) from Arabidopsis thaliana (Mouse-ear cress).